A 579-amino-acid chain; its full sequence is Proline--tRNA ligase (579 aa).

It belongs to the class-II aminoacyl-tRNA synthetase family. ProS type 1 subfamily. Homodimer.

It localises to the cytoplasm. The enzyme catalyses tRNA(Pro) + L-proline + ATP = L-prolyl-tRNA(Pro) + AMP + diphosphate. Catalyzes the attachment of proline to tRNA(Pro) in a two-step reaction: proline is first activated by ATP to form Pro-AMP and then transferred to the acceptor end of tRNA(Pro). As ProRS can inadvertently accommodate and process non-cognate amino acids such as alanine and cysteine, to avoid such errors it has two additional distinct editing activities against alanine. One activity is designated as 'pretransfer' editing and involves the tRNA(Pro)-independent hydrolysis of activated Ala-AMP. The other activity is designated 'posttransfer' editing and involves deacylation of mischarged Ala-tRNA(Pro). The misacylated Cys-tRNA(Pro) is not edited by ProRS. This is Proline--tRNA ligase from Chlamydia muridarum (strain MoPn / Nigg).